Here is a 391-residue protein sequence, read N- to C-terminus: Galactarate dehydratase (D-threo-forming) (391 aa).

R15 contacts substrate. Residues D42 and H45 each coordinate Mg(2+). Y89 serves as a coordination point for substrate. The Proton donor role is filled by Y90. Y164 functions as the Proton acceptor in the catalytic mechanism. Mg(2+) is bound by residues D193, E221, and H246. T296 serves as a coordination point for substrate. T297 is a Mg(2+) binding site. Residue R385 participates in substrate binding.

This sequence belongs to the mandelate racemase/muconate lactonizing enzyme family. The cofactor is Mg(2+).

The catalysed reaction is galactarate = (2S,3R)-dihydroxy-5-oxohexanedioate + H2O. Catalyzes the regioselective dehydration of galactarate into 2-keto-D-threo-4,5-dihydroxyadipate ((2S,3R)-dihydroxy-5-oxohexanedioate). Is not active on other acid sugars. The polypeptide is Galactarate dehydratase (D-threo-forming) (Oceanobacillus iheyensis (strain DSM 14371 / CIP 107618 / JCM 11309 / KCTC 3954 / HTE831)).